The chain runs to 264 residues: Alkaline ceramidase 1 (264 aa).

The Lumenal portion of the chain corresponds to methionine 1 to glutamate 27. The Ca(2+) site is built by aspartate 13, tryptophan 14, glutamate 16, asparagine 18, and glutamate 27. A helical transmembrane segment spans residues phenylalanine 28 to methionine 48. Over histidine 49 to arginine 57 the chain is Cytoplasmic. The helical transmembrane segment at tyrosine 58 to methionine 78 threads the bilayer. Histidine 77 serves as a coordination point for Zn(2+). Over threonine 79 to serine 81 the chain is Lumenal. Residues phenylalanine 82–isoleucine 102 traverse the membrane as a helical segment. Residues tryptophan 103–glutamine 119 lie on the Cytoplasmic side of the membrane. A helical membrane pass occupies residues phenylalanine 120–leucine 137. Arginine 138 is a topological domain (lumenal). Residues proline 139–glutamine 159 traverse the membrane as a helical segment. The Cytoplasmic segment spans residues glutamate 160–serine 176. A helical transmembrane segment spans residues valine 177–tryptophan 197. Over glutamine 198–histidine 206 the chain is Lumenal. The Zn(2+) site is built by histidine 206 and histidine 210. Residues serine 207–valine 227 form a helical membrane-spanning segment. Residues aspartate 228 to cysteine 264 lie on the Cytoplasmic side of the membrane.

It belongs to the alkaline ceramidase family. The cofactor is Zn(2+). As to expression, mainly expressed in epidermis.

The protein localises to the endoplasmic reticulum membrane. The enzyme catalyses an N-acylsphing-4-enine + H2O = sphing-4-enine + a fatty acid. It carries out the reaction N-tetracosanoyl-sphing-4-enine + H2O = tetracosanoate + sphing-4-enine. The catalysed reaction is an N-acylsphinganine + H2O = sphinganine + a fatty acid. It catalyses the reaction N-(9Z-octadecenoyl)-sphing-4-enine + H2O = sphing-4-enine + (9Z)-octadecenoate. The enzyme catalyses N-(15Z-tetracosenoyl)-sphing-4-enine + H2O = (15Z)-tetracosenoate + sphing-4-enine. It functions in the pathway lipid metabolism; sphingolipid metabolism. With respect to regulation, inhibited by sphingosine. Activity is Ca(2+)-dependent. Its function is as follows. Endoplasmic reticulum ceramidase that catalyzes the hydrolysis of ceramides into sphingosine and free fatty acids at alkaline pH. Ceramides, sphingosine, and its phosphorylated form sphingosine-1-phosphate are bioactive lipids that mediate cellular signaling pathways regulating several biological processes including cell proliferation, apoptosis and differentiation. Exhibits a strong substrate specificity towards the natural stereoisomer of ceramides with D-erythro-sphingosine as a backbone and has a higher activity towards very long-chain unsaturated fatty acids like the C24:1-ceramide. May also hydrolyze dihydroceramides to produce dihydrosphingosine. ACER1 is a skin-specific ceramidase that regulates the levels of ceramides, sphingosine and sphingosine-1-phosphate in the epidermis, mediates the calcium-induced differentiation of epidermal keratinocytes and more generally plays an important role in skin homeostasis. The chain is Alkaline ceramidase 1 from Homo sapiens (Human).